Here is a 318-residue protein sequence, read N- to C-terminus: Mechanosensory protein 3 (318 aa).

LIM zinc-binding domains lie at 27 to 86 and 87 to 152; these read NKCY…DYSA and HRCA…PMDD. The homeobox DNA-binding region spans 214 to 273; the sequence is RRGPRTTIRQNQLDVLNEMFSNTPKPSKHARAKLALETGLSMRVIQVWFQNRRSKERRLK.

Its subcellular location is the nucleus. In terms of biological role, specifies differentiation of the set of six touch receptor neurons. Binds cooperatively as a heterodimer with unc-86 to sites in the mec-3 gene promoter. The sequence is that of Mechanosensory protein 3 (mec-3) from Caenorhabditis briggsae.